A 298-amino-acid polypeptide reads, in one-letter code: Ribosomal RNA small subunit methyltransferase H (298 aa).

S-adenosyl-L-methionine-binding positions include 35 to 37, D55, F82, D100, and Q107; that span reads GGH.

The protein belongs to the methyltransferase superfamily. RsmH family.

The protein localises to the cytoplasm. It carries out the reaction cytidine(1402) in 16S rRNA + S-adenosyl-L-methionine = N(4)-methylcytidine(1402) in 16S rRNA + S-adenosyl-L-homocysteine + H(+). Functionally, specifically methylates the N4 position of cytidine in position 1402 (C1402) of 16S rRNA. This chain is Ribosomal RNA small subunit methyltransferase H, found in Chlamydia felis (strain Fe/C-56) (Chlamydophila felis).